A 295-amino-acid chain; its full sequence is Cyclin-G1 (295 aa).

The protein belongs to the cyclin family. Cyclin G subfamily.

The protein localises to the nucleus. Its function is as follows. May play a role in growth regulation. Is associated with G2/M phase arrest in response to DNA damage. May be an intermediate by which p53 mediates its role as an inhibitor of cellular proliferation. This chain is Cyclin-G1 (CCNG1), found in Sus scrofa (Pig).